The sequence spans 248 residues: tRNA pseudouridine synthase A (248 aa).

Residue aspartate 53 is the Nucleophile of the active site. Residue tyrosine 116 coordinates substrate.

Belongs to the tRNA pseudouridine synthase TruA family. Homodimer.

It catalyses the reaction uridine(38/39/40) in tRNA = pseudouridine(38/39/40) in tRNA. Functionally, formation of pseudouridine at positions 38, 39 and 40 in the anticodon stem and loop of transfer RNAs. The protein is tRNA pseudouridine synthase A of Helicobacter hepaticus (strain ATCC 51449 / 3B1).